The sequence spans 780 residues: Pendrin (780 aa).

Residues 1–87 are Cytoplasmic-facing; that stretch reads MAAPGGRSEP…YRVKEWLLSD (87 aa). A helical membrane pass occupies residues 88-108; it reads VISGVSTGLVATLQGMAYALL. Residue alanine 109 is a topological domain, extracellular. Residues 110-130 form a helical membrane-spanning segment; the sequence is AVPVGYGLYSAFFPILTYFIF. Residues 131-135 lie on the Cytoplasmic side of the membrane; that stretch reads GTSRH. The helical transmembrane segment at 136–156 threads the bilayer; the sequence is ISVGPFPVVSLMVGSVVLSMA. Over 157–191 the chain is Extracellular; it reads PDEHFLVSSSNGTVLNTTMIDTAARDTARVLIASA. A helical membrane pass occupies residues 192–212; it reads LTLLVGIIQLIFGGLQIGFIV. The Cytoplasmic segment spans residues 213 to 218; it reads RYLADP. The helical transmembrane segment at 219 to 239 threads the bilayer; it reads LVGGFTTAAAFQVLVSQLKIV. Over 240-263 the chain is Extracellular; that stretch reads LNVSTKNYNGVLSIIYTLVEIFQN. Residues 264 to 284 form a helical membrane-spanning segment; the sequence is IGDTNLADFTAGLLTIVVCMA. The Cytoplasmic portion of the chain corresponds to 285–295; that stretch reads VKELNDRFRHK. A helical transmembrane segment spans residues 296–316; the sequence is IPVPIPIEVIVTIIATAISYG. Over 317–344 the chain is Extracellular; that stretch reads ANLEKNYNAGIVKSIPRGFLPPELPPVS. Residues 345-365 traverse the membrane as a helical segment; sequence LFSEMLAASFSIAVVAYAIAV. Over 366–384 the chain is Cytoplasmic; that stretch reads SVGKVYATKYDYTIDGNQE. Residues 385–405 traverse the membrane as a helical segment; it reads FIAFGISNIFSGFFSCFVATT. The Extracellular segment spans residues 406 to 421; that stretch reads ALSRTAVQESTGGKTQ. A helical membrane pass occupies residues 422 to 442; sequence VAGIISAAIVMIAILALGKLL. Topologically, residues 443 to 448 are cytoplasmic; it reads EPLQKS. Residues 449 to 469 traverse the membrane as a helical segment; the sequence is VLAAVVIANLKGMFMQLCDIP. The Extracellular segment spans residues 470–486; it reads RLWRQNKIDAVIWVFTC. A helical membrane pass occupies residues 487–507; that stretch reads IVSIILGLDLGLLAGLIFGLL. Residues 508–780 lie on the Cytoplasmic side of the membrane; that stretch reads TVVLRVQFPS…QDEAMRTLAS (273 aa). Positions 535-729 constitute an STAS domain; that stretch reads NYKNIEEPQG…LTVHDAILYL (195 aa).

It belongs to the SLC26A/SulP transporter (TC 2.A.53) family. Interacts with IQGAP1; this interaction enhances the chloride-bicarbonate exchange activity of SLC26A4. As to expression, highly expressed in the kidney (at protein level). High expression in adult thyroid, lower expression in adult and fetal kidney and fetal brain. Not expressed in other tissues.

The protein resides in the cell membrane. The protein localises to the apical cell membrane. It carries out the reaction chloride(in) = chloride(out). The catalysed reaction is iodide(out) = iodide(in). It catalyses the reaction hydrogencarbonate(in) + chloride(out) = hydrogencarbonate(out) + chloride(in). The enzyme catalyses iodide(in) + hydrogencarbonate(out) = iodide(out) + hydrogencarbonate(in). It carries out the reaction iodide(in) + chloride(out) = iodide(out) + chloride(in). The catalysed reaction is formate(in) + chloride(out) = formate(out) + chloride(in). Its function is as follows. Sodium-independent transporter of chloride and iodide. Mediates electroneutral chloride-bicarbonate, chloride-iodide and chloride-formate exchange with 1:1 stoichiometry. Mediates electroneutral iodide-bicarbonate exchange. The protein is Pendrin (SLC26A4) of Homo sapiens (Human).